The following is a 53-amino-acid chain: Collagen alpha-1(I) chain (53 aa).

The interval 1-53 is disordered; sequence SYGYBZKSAGVSVPGPMGPSGPRGLPGPPGAPGPZGFZGPPGZPGZPGSSGPM. Lys7 bears the Allysine mark. At Ser8 the chain carries Phosphoserine. Over residues 10 to 23 the composition is skewed to low complexity; sequence GVSVPGPMGPSGPR. A 4-hydroxyproline mark is found at Pro26, Pro29, Pro32, Pro41, Pro44, and Pro47. Over residues 34 to 53 the composition is skewed to low complexity; the sequence is PZGFZGPPGZPGZPGSSGPM.

This sequence belongs to the fibrillar collagen family. Trimers of one alpha 2(I) and two alpha 1(I) chains. Interacts with MRC2. Interacts with TRAM2. Interacts with MFAP4 in a Ca (2+)-dependent manner. Contains mostly 4-hydroxyproline. Proline residues at the third position of the tripeptide repeating unit (G-X-Y) are hydroxylated in some or all of the chains. Post-translationally, contains 3-hydroxyproline at a few sites. This modification occurs on the first proline residue in the sequence motif Gly-Pro-Hyp, where Hyp is 4-hydroxyproline. In terms of processing, lysine residues at the third position of the tripeptide repeating unit (G-X-Y) are 5-hydroxylated in some or all of the chains. O-glycosylated on hydroxylated lysine residues. The O-linked glycan consists of a Glc-Gal disaccharide. As to expression, forms the fibrils of tendon, ligaments and bones. In bones the fibrils are mineralized with calcium hydroxyapatite.

The protein resides in the secreted. The protein localises to the extracellular space. It localises to the extracellular matrix. Type I collagen is a member of group I collagen (fibrillar forming collagen). The chain is Collagen alpha-1(I) chain (COL1A1) from Oryctolagus cuniculus (Rabbit).